We begin with the raw amino-acid sequence, 612 residues long: Chaperone protein DnaK (612 aa).

Position 174 is a phosphothreonine; by autocatalysis (threonine 174). Positions 579 to 612 are disordered; the sequence is GSAGTGAGSQAGSAAGSGDGQSMDAEFKVKDEDK. The segment covering 581–597 has biased composition (gly residues); the sequence is AGTGAGSQAGSAAGSGD. Residues 603 to 612 show a composition bias toward basic and acidic residues; the sequence is AEFKVKDEDK.

The protein belongs to the heat shock protein 70 family.

Acts as a chaperone. This is Chaperone protein DnaK from Symbiobacterium thermophilum (strain DSM 24528 / JCM 14929 / IAM 14863 / T).